The chain runs to 355 residues: Putative cyclin-A3-1 (355 aa).

This sequence belongs to the cyclin family. Cyclin AB subfamily.

This chain is Putative cyclin-A3-1 (CYCA3-1), found in Arabidopsis thaliana (Mouse-ear cress).